A 622-amino-acid chain; its full sequence is Palmitoyltransferase ZDHHC17 (622 aa).

At 1–294 the chain is on the cytoplasmic side; that stretch reads MADGPDEYDT…LKADKEFRQK (294 aa). The segment at 1–295 is necessary and sufficient for interaction with DNAJC5 and SNAP25; it reads MADGPDEYDT…KADKEFRQKV (295 aa). ANK repeat units lie at residues 41–76, 79–108, 113–142, 146–175, 179–209, 214–243, and 247–276; these read THVD…VRQP, ENVT…IVDQ, LNST…DPSL, EGCS…DVDM, NGMT…SVNL, HKNT…NVDA, and KGES…AKGY. 2 helical membrane-spanning segments follow: residues 295–315 and 316–336; these read VMLG…DLNI and DSWL…QFLS. Residues 337–347 lie on the Lumenal side of the membrane; the sequence is KSFFDHSMHSA. A helical transmembrane segment spans residues 348-368; it reads LPLGIYLATKFWMYVTWFFWF. Topologically, residues 369–371 are cytoplasmic; sequence WND. The chain crosses the membrane as a helical span at residues 372 to 392; it reads LSFLSIHLPFLANSVALFYNF. The Lumenal segment spans residues 393–470; it reads GKSWKSDPGI…GNCVGAGNHR (78 aa). The region spanning 427-477 is the DHHC domain; it reads IFCSTCLIRKPVRSKHCGVCNRCIAKFDHHCPWVGNCVGAGNHRYFMGYLF. Cys457 serves as the catalytic S-palmitoyl cysteine intermediate. The helical transmembrane segment at 471–491 threads the bilayer; the sequence is YFMGYLFFLLFMICWMIYGCV. At 492–506 the chain is on the cytoplasmic side; the sequence is SYWGLHCETTYTKDG. A helical transmembrane segment spans residues 507–526; the sequence is FWTYITQIATCSPWMFWMFL. Residues 527-529 are Lumenal-facing; that stretch reads NSV. Residues 530–552 traverse the membrane as a helical segment; that stretch reads FHFMWVAVLLMCQMYQITCLGIT. Over 553 to 622 the chain is Cytoplasmic; that stretch reads TNERMNARRY…QISGSGYQLV (70 aa).

This sequence belongs to the DHHC palmitoyltransferase family. AKR/ZDHHC17 subfamily. In terms of assembly, interacts (via ANK repeats) with numerous proteins (via the consensus sequence motif [VIAP]-[VIT]-x-x-Q-P). Interacts (via ANK repeats) with CLIP3. Interacts (via ANK repeats) with HTT. Interacts (via ANK repeats) with DNAJC5 (via C-terminus). Interacts (via ANK repeats) with MAP6. Interacts (via ANK repeats) with SNAP23. Interacts (via ANK repeats) with SNAP25. Interacts (via ANK repeats) with EVL. Interacts with SPRED1 and SPRED3. Interacts with GPM6A and OPTN. May interact (via ANK repeats) with SPRED2. May interact with NTRK1; may regulate its localization and function. In terms of processing, autopalmitoylated. Autopalmitoylation has a regulatory role in ZDHHC17-mediated Mg(2+) transport.

Its subcellular location is the golgi apparatus membrane. The protein localises to the cytoplasmic vesicle membrane. It is found in the presynaptic cell membrane. It catalyses the reaction L-cysteinyl-[protein] + hexadecanoyl-CoA = S-hexadecanoyl-L-cysteinyl-[protein] + CoA. It carries out the reaction L-cysteinyl-[protein] + tetradecanoyl-CoA = S-tetradecanoyl-L-cysteinyl-[protein] + CoA. The catalysed reaction is L-cysteinyl-[protein] + octadecanoyl-CoA = S-octadecanoyl-L-cysteinyl-[protein] + CoA. Functionally, palmitoyltransferase that catalyzes the addition of palmitate onto various protein substrates and is involved in a variety of cellular processes. Has no stringent fatty acid selectivity and in addition to palmitate can also transfer onto target proteins myristate from tetradecanoyl-CoA and stearate from octadecanoyl-CoA. Palmitoyltransferase specific for a subset of neuronal proteins, including SNAP25, DLG4/PSD95, GAD2, SYT1 and HTT. Also palmitoylates neuronal protein GPM6A as well as SPRED1 and SPRED3. Could also play a role in axonogenesis through the regulation of NTRK1 and the downstream ERK1/ERK2 signaling cascade. May be involved in the sorting or targeting of critical proteins involved in the initiating events of endocytosis at the plasma membrane. May play a role in Mg(2+) transport. Could also palmitoylate DNAJC5 and regulate its localization to the Golgi membrane. Palmitoylates CASP6, thereby preventing its dimerization and subsequent activation. The protein is Palmitoyltransferase ZDHHC17 of Rattus norvegicus (Rat).